Consider the following 446-residue polypeptide: C4-dicarboxylate transport protein 2 (446 aa).

A run of 10 helical transmembrane segments spans residues 7-26, 46-64, 77-99, 152-171, 192-211, 221-243, 291-313, 318-340, 353-375, and 381-403; these read PLFG…GIWA, MLIA…CGAG, VIYF…YAFG, ILQV…LLGE, AVVI…FTVG, LGFL…LGGI, VVGL…YLTL, IAQA…VALI, IVIL…VLVL, and IGIA…IAAW.

This sequence belongs to the dicarboxylate/amino acid:cation symporter (DAACS) (TC 2.A.23) family.

It is found in the cell inner membrane. Its function is as follows. Responsible for the transport of dicarboxylates such as succinate, fumarate, and malate from the periplasm across the membrane. The protein is C4-dicarboxylate transport protein 2 (dctA2) of Ralstonia nicotianae (strain ATCC BAA-1114 / GMI1000) (Ralstonia solanacearum).